A 130-amino-acid polypeptide reads, in one-letter code: ESAT-6 secretion system extracellular protein C (130 aa).

The protein belongs to the EsxC family.

Its subcellular location is the secreted. This chain is ESAT-6 secretion system extracellular protein C, found in Staphylococcus aureus (strain MSSA476).